The chain runs to 193 residues: 3-isopropylmalate dehydratase small subunit (193 aa).

The protein belongs to the LeuD family. LeuD type 1 subfamily. Heterodimer of LeuC and LeuD.

It carries out the reaction (2R,3S)-3-isopropylmalate = (2S)-2-isopropylmalate. The protein operates within amino-acid biosynthesis; L-leucine biosynthesis; L-leucine from 3-methyl-2-oxobutanoate: step 2/4. Functionally, catalyzes the isomerization between 2-isopropylmalate and 3-isopropylmalate, via the formation of 2-isopropylmaleate. The protein is 3-isopropylmalate dehydratase small subunit of Bacillus cereus (strain B4264).